Consider the following 450-residue polypeptide: LanC-like protein 2 (450 aa).

A lipid anchor (N-myristoyl glycine) is attached at glycine 2. An interaction with inositol phospholipids region spans residues 2–14 (GETMSKRLKFHLG). Residue tyrosine 198 is modified to Phosphotyrosine.

Belongs to the LanC-like protein family. Interacts with an array of inositol phospholipids such as phosphatidylinositol 3-phosphate (PI3P), phosphatidylinositol 4-phosphate (PI4P) and phosphatidylinositol 5-phosphate (PI5P). PIP-binding enhances membrane association. Post-translationally, myristoylated. Essential for membrane association.

Its subcellular location is the nucleus. The protein resides in the cytoplasm. The protein localises to the cell membrane. Functionally, necessary for abscisic acid (ABA) binding on the cell membrane and activation of the ABA signaling pathway in granulocytes. The sequence is that of LanC-like protein 2 (Lancl2) from Mus musculus (Mouse).